A 611-amino-acid chain; its full sequence is tRNA uridine 5-carboxymethylaminomethyl modification enzyme MnmG (611 aa).

Residues 12–17 (GGGHAG), V124, and S179 contribute to the FAD site. 271–285 (GPRYCPSVEDKIVRF) serves as a coordination point for NAD(+). Q368 is a binding site for FAD.

It belongs to the MnmG family. As to quaternary structure, homodimer. Heterotetramer of two MnmE and two MnmG subunits. FAD serves as cofactor.

The protein localises to the cytoplasm. Functionally, NAD-binding protein involved in the addition of a carboxymethylaminomethyl (cmnm) group at the wobble position (U34) of certain tRNAs, forming tRNA-cmnm(5)s(2)U34. In Mycoplasma mobile (strain ATCC 43663 / 163K / NCTC 11711) (Mesomycoplasma mobile), this protein is tRNA uridine 5-carboxymethylaminomethyl modification enzyme MnmG.